The primary structure comprises 112 residues: MYAIFKSGGKQHKVIKGQTIRLEKINQSIGTQIKFKKILMCCNGTHITIGKPHIHNNFILANIINHGRHKKIKIIKFNRRKHYKKQQGHRQNFTDVLITNIHNNYREQNNGS.

It belongs to the bacterial ribosomal protein bL21 family. Part of the 50S ribosomal subunit. Contacts protein L20.

Functionally, this protein binds to 23S rRNA in the presence of protein L20. This Buchnera aphidicola subsp. Baizongia pistaciae (strain Bp) protein is Large ribosomal subunit protein bL21.